The following is a 1094-amino-acid chain: Probable arabinosyltransferase C (1094 aa).

13 helical membrane passes run 28-50 (IARY…TPLL), 232-251 (AAMI…LHIL), 264-286 (PARW…WWHF), 341-360 (SIWM…WVIS), 373-392 (TSRA…WLPL), 431-453 (IGAL…LVAI), 466-488 (RFGV…IPIF), 530-552 (SIAR…AMSL), 565-582 (SRRI…MMFT), 586-608 (WTHH…AVAV), 620-642 (TVFA…GWWY), 657-679 (WRWS…AAWF), and 700-722 (LAGI…EVVS). Positions 817–831 (GSEPGTEGGTTAAPG) are enriched in low complexity. The interval 817-836 (GSEPGTEGGTTAAPGINGSR) is disordered.

This sequence belongs to the emb family.

It localises to the cell membrane. In terms of biological role, arabinosyl transferase responsible for the polymerization of arabinose into the arabinan of arabinogalactan. This Mycobacterium tuberculosis (strain CDC 1551 / Oshkosh) protein is Probable arabinosyltransferase C (embC).